A 633-amino-acid polypeptide reads, in one-letter code: MDKNTLIGFLLIGVVLFAFSWFNRPTPEQLEAQRRYQDSIAKIEYAQQLELQKQENKSALVEDSLENLPDSVRAQRLQQSFGVFGDAMVGTEDYTTLQNDVVELRISNKGGRICYARLKEYDTYNDEPLVLFDEKESNFNFTLVTATNRVVNTSDLYFTPVKGNDPNSVIMRLNTGEGSHLDFTYTLKPDDYMVQYQILGTGLNGVLAPSTNALDLLWEQDIRQQEKGRKFEDRYVTLNYKFMADDVEHLSESKSDSKQIPNRLKWIGYKDMFFSTVLISQEGFEATTLDSKAIPEGDVLKQFKTTASVPFDLQGKEATNLSFYFGPNKFALLKSFDKGVSAEQQLDLEKLVPLGWGIFRWVNQYFVIPLFDFLGKFIHNYGILILLMTIIVKIILFPLTYKSYMSSAKMRVLRPQVEEINAKYPGQDKAMERQKATMELYSRAGASPMSGCLPMLLQMPILIALFMFFPSAIELRHQSFLWAHDLSTYDAIFSWNKYIPIITPYFGNHISLFCLLMTITNIFYTKYNMEMTNTGQQQMPGMKAMMYMMPLMFLVFFNQYASGLTYYYFISTLITIVQTLIFRYTINEDKLLAKLEANKRKPMKKSGFMKRLEEAQRAQQETLRKQQEAKKKR.

6 consecutive transmembrane segments (helical) span residues 3 to 23 (KNTL…SWFN), 377 to 397 (FIHN…IILF), 453 to 473 (LPML…PSAI), 499 to 519 (IPII…LMTI), 541 to 561 (GMKA…NQYA), and 562 to 582 (SGLT…TLIF). The segment at 612–633 (LEEAQRAQQETLRKQQEAKKKR) is disordered.

It belongs to the OXA1/ALB3/YidC family. Type 1 subfamily. Interacts with the Sec translocase complex via SecD. Specifically interacts with transmembrane segments of nascent integral membrane proteins during membrane integration.

Its subcellular location is the cell inner membrane. Required for the insertion and/or proper folding and/or complex formation of integral membrane proteins into the membrane. Involved in integration of membrane proteins that insert both dependently and independently of the Sec translocase complex, as well as at least some lipoproteins. Aids folding of multispanning membrane proteins. This chain is Membrane protein insertase YidC, found in Parabacteroides distasonis (strain ATCC 8503 / DSM 20701 / CIP 104284 / JCM 5825 / NCTC 11152).